The following is a 438-amino-acid chain: sn-glycerol-3-phosphate-binding periplasmic protein UgpB (438 aa).

A signal peptide spans 1-23 (MKPLHYTASALALGLALMGNAQA). 7 residues coordinate sn-glycerol 3-phosphate: tyrosine 65, glutamate 89, serine 144, serine 270, glycine 307, tyrosine 346, and arginine 397.

The protein belongs to the bacterial solute-binding protein 1 family. The complex is composed of two ATP-binding proteins (UgpC), two transmembrane proteins (UgpA and UgpE) and a solute-binding protein (UgpB).

The protein localises to the periplasm. Its function is as follows. Part of the ABC transporter complex UgpBAEC involved in sn-glycerol-3-phosphate (G3P) import. Binds G3P. This Shigella flexneri serotype 5b (strain 8401) protein is sn-glycerol-3-phosphate-binding periplasmic protein UgpB (ugpB).